Consider the following 261-residue polypeptide: Taurine import ATP-binding protein TauB (261 aa).

Positions 4–233 (LQLEGIGAHY…RYSAGESARA (230 aa)) constitute an ABC transporter domain. Residue 38 to 45 (GPSGSGKT) participates in ATP binding.

This sequence belongs to the ABC transporter superfamily. Taurine importer (TC 3.A.1.17.1) family. In terms of assembly, the complex is composed of two ATP-binding proteins (TauB), two transmembrane proteins (TauC) and a solute-binding protein (TauA).

The protein localises to the cell inner membrane. The enzyme catalyses taurine(out) + ATP + H2O = taurine(in) + ADP + phosphate + H(+). Part of the ABC transporter complex TauABC involved in taurine import. Responsible for energy coupling to the transport system. This is Taurine import ATP-binding protein TauB from Pseudomonas syringae pv. tomato (strain ATCC BAA-871 / DC3000).